Here is a 347-residue protein sequence, read N- to C-terminus: 3-isopropylmalate dehydrogenase (347 aa).

Position 76–87 (76–87 (GPKWTDPNNRPE)) interacts with NAD(+). Substrate-binding residues include arginine 94, arginine 104, arginine 132, and aspartate 217. Mg(2+) contacts are provided by aspartate 217, aspartate 241, and aspartate 245. NAD(+) is bound at residue 275–287 (GSAPDIANEDKAN).

Belongs to the isocitrate and isopropylmalate dehydrogenases family. LeuB type 1 subfamily. In terms of assembly, homodimer. The cofactor is Mg(2+). Mn(2+) serves as cofactor.

Its subcellular location is the cytoplasm. The catalysed reaction is (2R,3S)-3-isopropylmalate + NAD(+) = 4-methyl-2-oxopentanoate + CO2 + NADH. It participates in amino-acid biosynthesis; L-leucine biosynthesis; L-leucine from 3-methyl-2-oxobutanoate: step 3/4. Catalyzes the oxidation of 3-carboxy-2-hydroxy-4-methylpentanoate (3-isopropylmalate) to 3-carboxy-4-methyl-2-oxopentanoate. The product decarboxylates to 4-methyl-2 oxopentanoate. The chain is 3-isopropylmalate dehydrogenase from Staphylococcus epidermidis (strain ATCC 35984 / DSM 28319 / BCRC 17069 / CCUG 31568 / BM 3577 / RP62A).